The sequence spans 397 residues: 1-deoxy-D-xylulose 5-phosphate reductoisomerase (397 aa).

NADPH is bound by residues S10, G11, S12, I13, A36, R37, and N124. K125 contacts 1-deoxy-D-xylulose 5-phosphate. Position 126 (E126) interacts with NADPH. Residue D150 coordinates Mn(2+). The 1-deoxy-D-xylulose 5-phosphate site is built by S151, E152, S186, and H209. Residue E152 coordinates Mn(2+). G215 contacts NADPH. 1-deoxy-D-xylulose 5-phosphate contacts are provided by S222, N227, K228, and E231. Mn(2+) is bound at residue E231.

Belongs to the DXR family. Requires Mg(2+) as cofactor. Mn(2+) serves as cofactor.

The enzyme catalyses 2-C-methyl-D-erythritol 4-phosphate + NADP(+) = 1-deoxy-D-xylulose 5-phosphate + NADPH + H(+). It participates in isoprenoid biosynthesis; isopentenyl diphosphate biosynthesis via DXP pathway; isopentenyl diphosphate from 1-deoxy-D-xylulose 5-phosphate: step 1/6. Its function is as follows. Catalyzes the NADPH-dependent rearrangement and reduction of 1-deoxy-D-xylulose-5-phosphate (DXP) to 2-C-methyl-D-erythritol 4-phosphate (MEP). In Aeromonas salmonicida (strain A449), this protein is 1-deoxy-D-xylulose 5-phosphate reductoisomerase.